The chain runs to 406 residues: 3-phosphoshikimate 1-carboxyvinyltransferase (406 aa).

3-phosphoshikimate is bound by residues Lys-20, Ser-21, and Arg-25. Lys-20 is a binding site for phosphoenolpyruvate. The phosphoenolpyruvate site is built by Gly-84 and Arg-112. Residues Ser-155, Ser-156, Gln-157, Asp-295, Gln-317, and Lys-321 each coordinate 3-phosphoshikimate. Gln-157 is a binding site for phosphoenolpyruvate. The active-site Proton acceptor is the Asp-295. Residues Arg-325, Arg-366, and Lys-392 each coordinate phosphoenolpyruvate.

This sequence belongs to the EPSP synthase family. As to quaternary structure, monomer.

The protein localises to the cytoplasm. The enzyme catalyses 3-phosphoshikimate + phosphoenolpyruvate = 5-O-(1-carboxyvinyl)-3-phosphoshikimate + phosphate. It participates in metabolic intermediate biosynthesis; chorismate biosynthesis. Catalyzes the transfer of the enolpyruvyl moiety of phosphoenolpyruvate (PEP) to the 5-hydroxyl of shikimate-3-phosphate (S3P) to produce enolpyruvyl shikimate-3-phosphate and inorganic phosphate. The chain is 3-phosphoshikimate 1-carboxyvinyltransferase from Pyrococcus furiosus (strain ATCC 43587 / DSM 3638 / JCM 8422 / Vc1).